A 110-amino-acid polypeptide reads, in one-letter code: Small ribosomal subunit protein bS16 (110 aa).

The interval 87-110 (ARQNPIKAVPRKERKAQAEAAAKG) is disordered.

Belongs to the bacterial ribosomal protein bS16 family.

This is Small ribosomal subunit protein bS16 from Bradyrhizobium sp. (strain BTAi1 / ATCC BAA-1182).